A 211-amino-acid chain; its full sequence is Protein-L-isoaspartate O-methyltransferase (211 aa).

Serine 62 is an active-site residue.

Belongs to the methyltransferase superfamily. L-isoaspartyl/D-aspartyl protein methyltransferase family.

Its subcellular location is the cytoplasm. It catalyses the reaction [protein]-L-isoaspartate + S-adenosyl-L-methionine = [protein]-L-isoaspartate alpha-methyl ester + S-adenosyl-L-homocysteine. Functionally, catalyzes the methyl esterification of L-isoaspartyl residues in peptides and proteins that result from spontaneous decomposition of normal L-aspartyl and L-asparaginyl residues. It plays a role in the repair and/or degradation of damaged proteins. This chain is Protein-L-isoaspartate O-methyltransferase, found in Shewanella frigidimarina (strain NCIMB 400).